Here is a 926-residue protein sequence, read N- to C-terminus: MDRIVIRGARQHNLKNIDVEIPKNKLVVITGPSGSGKSSLAFDTLYAEGQRRYVESLSAYARQFLGVMEKPEVDSIEGLSPAIAIDQKTTSKNPRSTVGTVTEIYDYLRVLWANVGKPHCPHCGNLLSGLSAHEILDRIVEKYKGKRVMILSPIVRGKKGEFRELLRQIEKWGYSRVKVDGELRRVIEVPPLEKNKKHTIELVIDRLTVSEEERARLLEDVEKALEFSSGLVKIEEVESGKEELFSEKLVCPEHGFSIPELSARLFSFNSPYGACPSCKGLGVKWEIDPAVLIDPEKPAVKAVKIVESGYFNYLRFPIANVIRKLGYDPRTPWKKLPESVRATVLYGSESLNFEGIIPHLERRFLEEESERIREEIEDYIVEKPCPECKGARLRKEALAVLIDGKSIWDVVNMPVGKAKEFFEELYEKLEGKEKIIADRLLKEIIERLGFLVNVGLDYLSLSRSATTLSGGEMQRIRLATQLGSKLTGVLYVLDEPSIGLHPRDTSKLINTLKGLRDLGNTVVVVEHDPETIESADHVIELGPGAGKHGGYLVAQGTVEEIKSHPSSLTGAYLSGRKEIPVPKERRKPSGKFIRIVRAKEHNLKNINVDIPLGLFVCITGVSGSGKSTLIYDILYKYAKNYFYGTHEQVGEVEKIEGLENIDKVINIDQSPIGRTPRSNPATYTKVFDLIRNLFAQTPEAKARGYKPGRFSFNVKGGRCEACQGEGVIKVEMHFLPPVYVTCEVCKGKRYNRETLEITYKGKNIADVLEMTVDEAYDFFENHPAIRRKLQILKDVGLGYIKLGQPAPTLSGGEAQRIKLARELSKKETGRTLYLLDEPTTGLHMDDVKKLIDVLQRLVDKGNTVVVIEHNLDVIKCADWIIDLGPEGGERGGQVVAVGTPEEVAQNPNSYTGKYLRKYLKKETLKV.

Position 31 to 38 (31 to 38 (GPSGSGKS)) interacts with ATP. The segment at 251-278 (CPEHGFSIPELSARLFSFNSPYGACPSC) adopts a C4-type zinc-finger fold. 2 ABC transporter domains span residues 308–568 (SGYF…PSSL) and 588–916 (PSGK…KYLR). Residue 620-627 (GVSGSGKS) coordinates ATP. A C4-type zinc finger spans residues 719–745 (CEACQGEGVIKVEMHFLPPVYVTCEVC).

This sequence belongs to the ABC transporter superfamily. UvrA family. In terms of assembly, forms a heterotetramer with UvrB during the search for lesions.

The protein localises to the cytoplasm. Its function is as follows. The UvrABC repair system catalyzes the recognition and processing of DNA lesions. UvrA is an ATPase and a DNA-binding protein. A damage recognition complex composed of 2 UvrA and 2 UvrB subunits scans DNA for abnormalities. When the presence of a lesion has been verified by UvrB, the UvrA molecules dissociate. The sequence is that of UvrABC system protein A from Aquifex aeolicus (strain VF5).